Here is a 202-residue protein sequence, read N- to C-terminus: ATP-dependent Clp protease proteolytic subunit (202 aa).

Serine 106 acts as the Nucleophile in catalysis. The active site involves histidine 131.

It belongs to the peptidase S14 family. In terms of assembly, fourteen ClpP subunits assemble into 2 heptameric rings which stack back to back to give a disk-like structure with a central cavity, resembling the structure of eukaryotic proteasomes.

It localises to the cytoplasm. The catalysed reaction is Hydrolysis of proteins to small peptides in the presence of ATP and magnesium. alpha-casein is the usual test substrate. In the absence of ATP, only oligopeptides shorter than five residues are hydrolyzed (such as succinyl-Leu-Tyr-|-NHMec, and Leu-Tyr-Leu-|-Tyr-Trp, in which cleavage of the -Tyr-|-Leu- and -Tyr-|-Trp bonds also occurs).. Its function is as follows. Cleaves peptides in various proteins in a process that requires ATP hydrolysis. Has a chymotrypsin-like activity. Plays a major role in the degradation of misfolded proteins. The polypeptide is ATP-dependent Clp protease proteolytic subunit (Paracidovorax citrulli (strain AAC00-1) (Acidovorax citrulli)).